The following is a 218-amino-acid chain: Glutathione S-transferase Mu 2 (218 aa).

Residues 2 to 88 form the GST N-terminal domain; the sequence is PMTLGYWDIR…YLARKHNLCG (87 aa). 7–8 is a binding site for glutathione; it reads YW. Phosphoserine is present on residues Ser-27 and Ser-44. Residues 43 to 46, Lys-50, 59 to 60, and 72 to 73 each bind glutathione; these read RSQW, NL, and QS. One can recognise a GST C-terminal domain in the interval 90 to 208; that stretch reads TEEERIRVDI…KSSRFLSKPI (119 aa). Residue Tyr-116 coordinates substrate. Ser-117 bears the Phosphoserine mark.

The protein belongs to the GST superfamily. Mu family. In terms of assembly, homodimer.

Its subcellular location is the cytoplasm. The catalysed reaction is RX + glutathione = an S-substituted glutathione + a halide anion + H(+). The enzyme catalyses 11(S)-hydroxy-14(S),15(S)-epoxy-(5Z,8Z,12E)-eicosatrienoate + glutathione = (11S,15S)-dihydroxy-14(R)-S-glutathionyl-(5Z,8Z,12E)-eicosatrienoate. In terms of biological role, conjugation of reduced glutathione to a wide number of exogenous and endogenous hydrophobic electrophiles. Participates in the formation of novel hepoxilin regioisomers. This is Glutathione S-transferase Mu 2 from Mus musculus (Mouse).